The chain runs to 458 residues: Sphingoid long chain base kinase 4 (458 aa).

Residues 103–241 enclose the DAGKc domain; sequence KRSRRFIVFI…FDLMTFEQKG (139 aa). ATP contacts are provided by residues 113–115 and Thr-145; that span reads NPH. 170 to 173 contacts substrate; that stretch reads GGDG. The Proton donor/acceptor role is filled by Asp-172. Residues Glu-177, 202 to 204, Arg-266, Arg-272, and 426 to 428 contribute to the ATP site; these read GSG and DGE.

The protein localises to the cell membrane. The protein resides in the endoplasmic reticulum membrane. It localises to the late endosome membrane. Its subcellular location is the golgi apparatus membrane. It carries out the reaction a sphingoid base + ATP = a sphingoid 1-phosphate + ADP + H(+). Catalyzes the phosphorylation of the sphingoid long chain bases dihydrosphingosine (DHS) and phytosphingosine (PHS) to form dihydrosphingosine 1-phosphate (DHS-1P) and phytosphingosine 1-phosphate (PHS-1P) respectively. Involved in the biosynthesis of sphingolipids and ceramides. Involved in heat-induced transient cell cycle arrest. Accumulation of phosphorylated sphingoid long chain bases (LCBPs) stimulates calcium influx and activates calcineurin signaling. Involved in heat-stress resistance. The protein is Sphingoid long chain base kinase 4 (lcb4) of Schizosaccharomyces pombe (strain 972 / ATCC 24843) (Fission yeast).